Here is a 42-residue protein sequence, read N- to C-terminus: Photosystem II reaction center protein J (42 aa).

The helical transmembrane segment at 10-30 threads the bilayer; it reads IPLWFIGVIAGIAALSIVGLF.

It belongs to the PsbJ family. In terms of assembly, PSII is composed of 1 copy each of membrane proteins PsbA, PsbB, PsbC, PsbD, PsbE, PsbF, PsbH, PsbI, PsbJ, PsbK, PsbL, PsbM, PsbT, PsbX, PsbY, PsbZ, Psb30/Ycf12, at least 3 peripheral proteins of the oxygen-evolving complex and a large number of cofactors. It forms dimeric complexes.

It is found in the plastid. The protein resides in the chloroplast thylakoid membrane. Functionally, one of the components of the core complex of photosystem II (PSII). PSII is a light-driven water:plastoquinone oxidoreductase that uses light energy to abstract electrons from H(2)O, generating O(2) and a proton gradient subsequently used for ATP formation. It consists of a core antenna complex that captures photons, and an electron transfer chain that converts photonic excitation into a charge separation. The protein is Photosystem II reaction center protein J of Zygnema circumcarinatum (Green alga).